The chain runs to 283 residues: Pantothenate synthetase (283 aa).

30–37 contributes to the ATP binding site; sequence MGALHEGH. H37 serves as the catalytic Proton donor. Q61 is a binding site for (R)-pantoate. A beta-alanine-binding site is contributed by Q61. ATP is bound at residue 147-150; sequence GEKD. Residue Q153 coordinates (R)-pantoate. ATP-binding positions include V176 and 184–187; that span reads VSSR.

It belongs to the pantothenate synthetase family. In terms of assembly, homodimer.

It localises to the cytoplasm. It carries out the reaction (R)-pantoate + beta-alanine + ATP = (R)-pantothenate + AMP + diphosphate + H(+). It functions in the pathway cofactor biosynthesis; (R)-pantothenate biosynthesis; (R)-pantothenate from (R)-pantoate and beta-alanine: step 1/1. In terms of biological role, catalyzes the condensation of pantoate with beta-alanine in an ATP-dependent reaction via a pantoyl-adenylate intermediate. The polypeptide is Pantothenate synthetase (Chlorobium limicola (strain DSM 245 / NBRC 103803 / 6330)).